The primary structure comprises 600 residues: Aspartate--tRNA(Asp/Asn) ligase (600 aa).

Glu175 serves as a coordination point for L-aspartate. An aspartate region spans residues 199–202 (QLFK). Arg221 contributes to the L-aspartate binding site. ATP is bound by residues 221–223 (RDE) and Gln230. His453 lines the L-aspartate pocket. Glu487 lines the ATP pocket. Arg494 contacts L-aspartate. Position 539-542 (539-542 (GWDR)) interacts with ATP. The segment at 564–600 (GGVDPLTDAPAPITPLQRKESGIDAKPKAAENKPEEK) is disordered. Basic and acidic residues predominate over residues 580-600 (QRKESGIDAKPKAAENKPEEK).

It belongs to the class-II aminoacyl-tRNA synthetase family. Type 1 subfamily. As to quaternary structure, homodimer.

The protein resides in the cytoplasm. The enzyme catalyses tRNA(Asx) + L-aspartate + ATP = L-aspartyl-tRNA(Asx) + AMP + diphosphate. Functionally, aspartyl-tRNA synthetase with relaxed tRNA specificity since it is able to aspartylate not only its cognate tRNA(Asp) but also tRNA(Asn). Reaction proceeds in two steps: L-aspartate is first activated by ATP to form Asp-AMP and then transferred to the acceptor end of tRNA(Asp/Asn). The chain is Aspartate--tRNA(Asp/Asn) ligase from Corynebacterium efficiens (strain DSM 44549 / YS-314 / AJ 12310 / JCM 11189 / NBRC 100395).